We begin with the raw amino-acid sequence, 398 residues long: Phytoene synthase 2, chloroplastic (398 aa).

The N-terminal 80 residues, 1-80, are a transit peptide targeting the chloroplast; sequence MASSSSAAAL…EEAVYEVVLR (80 aa).

Belongs to the phytoene/squalene synthase family. As to expression, expressed in leaves and endosperm. Expressed in developing leaves.

It localises to the plastid. The protein localises to the chloroplast membrane. Its subcellular location is the chloroplast. The protein resides in the plastoglobule. The catalysed reaction is 2 (2E,6E,10E)-geranylgeranyl diphosphate = 15-cis-phytoene + 2 diphosphate. In terms of biological role, catalyzes the conversion of geranylgeranyl diphosphate to phytoene. Mediates the first committed step in carotenoid biosynthesis. This chain is Phytoene synthase 2, chloroplastic, found in Oryza sativa subsp. japonica (Rice).